Reading from the N-terminus, the 413-residue chain is Transmembrane protein 184A (413 aa).

Transmembrane regions (helical) follow at residues 47–69 (WLFL…ALVL), 93–113 (LLLI…LLGD), 130–150 (FVIY…GAIM), 187–207 (LQFC…QAFG), 223–243 (VTLI…LFYF), 258–278 (FLTI…LAIL), and 300–320 (LAAG…SVAL). A disordered region spans residues 372-413 (QHYTQQATHEAPRPGTHPSGGSGGSRKSRSLEKRMLIPSEDL).

The protein belongs to the TMEM184 family. In terms of tissue distribution, expressed in vascular cells (at protein level).

It is found in the cell membrane. The protein resides in the cytoplasm. The protein localises to the perinuclear region. It localises to the cytoplasmic vesicle membrane. Its subcellular location is the early endosome membrane. It is found in the endosome. The protein resides in the cytoplasmic vesicle. The protein localises to the secretory vesicle membrane. Acts as a heparin receptor in vascular cells. May be involved in vesicle transport in exocrine cells and Sertoli cells. In Homo sapiens (Human), this protein is Transmembrane protein 184A (TMEM184A).